Reading from the N-terminus, the 616-residue chain is Methylmalonyl-CoA mutase small subunit (616 aa).

The protein belongs to the methylmalonyl-CoA mutase family. Heterodimer of an alpha and a beta chain. Requires adenosylcob(III)alamin as cofactor.

It carries out the reaction (R)-methylmalonyl-CoA = succinyl-CoA. Its pathway is metabolic intermediate metabolism; propanoyl-CoA degradation; succinyl-CoA from propanoyl-CoA: step 3/3. In terms of biological role, catalyzes the isomerization of succinyl-CoA to methylmalonyl-CoA during synthesis of propionate from tricarboxylic acid-cycle intermediates. This conversion most likely represents an important source of building blocks for polyketide antibiotic biosynthesis. It is unable to catalyze the conversion of isobutyryl-CoA into N-butyryl-CoA. The protein is Methylmalonyl-CoA mutase small subunit (mutA) of Streptomyces virginiae (Streptomyces cinnamonensis).